A 531-amino-acid chain; its full sequence is Outer dynein arm-docking complex subunit 4 (531 aa).

TPR repeat units lie at residues phenylalanine 15–glutamate 48, asparagine 50–phenylalanine 82, and phenylalanine 83–phenylalanine 116. The tract at residues lysine 161 to glutamine 185 is disordered. Over residues glutamine 169–glutamine 185 the composition is skewed to basic and acidic residues. 5 TPR repeats span residues valine 275–tryptophan 307, glycine 320–tyrosine 353, serine 360–serine 393, threonine 397–alanine 430, and leucine 437–leucine 470. Residues lysine 487–glycine 531 form a disordered region. A compositionally biased stretch (acidic residues) spans glutamate 492–asparagine 503. Basic and acidic residues predominate over residues valine 521–glycine 531.

In terms of assembly, component of the outer dynein arm-docking complex. In terms of tissue distribution, in the mucociliary epithelium, specifically expressed in ciliated cells.

It is found in the cytoplasm. The protein localises to the cytoskeleton. The protein resides in the cilium axoneme. Component of the outer dynein arm-docking complex (ODA-DC) that mediates outer dynein arms (ODA) binding onto the doublet microtubule. Plays an essential role for the assembly of ODA-DC and in the docking of ODA in ciliary axoneme. Functionally, required for the docking of the outer dynein arm to cilia, hence plays an essential role in cilia motility. This chain is Outer dynein arm-docking complex subunit 4 (odad4), found in Xenopus laevis (African clawed frog).